A 110-amino-acid chain; its full sequence is UPF0060 membrane protein Veis_0342 (110 aa).

Transmembrane regions (helical) follow at residues 8–28, 33–53, 63–83, and 90–110; these read VLFTITAVVEIVGCYLPWLVI, PLWLLLPAALSLALFAWLLTL, AAYGGIYIAVALAWLHWVDGV, and VAGATVAMVGMLIIMLQPASA.

Belongs to the UPF0060 family.

Its subcellular location is the cell inner membrane. The sequence is that of UPF0060 membrane protein Veis_0342 from Verminephrobacter eiseniae (strain EF01-2).